The sequence spans 329 residues: T-cell acute lymphocytic leukemia protein 1 homolog (329 aa).

Disordered regions lie at residues 1 to 28, 40 to 78, and 91 to 125; these read MTERPPSEAARSDPQLEGQDAAEARMAP, ETSRAAPAEPPVIELGARSGAGGGPASGGGAARDLKGRD, and TELCRPPGPAPAPAPASAPAELPGDGRMVQLSPPA. Ser12 carries the phosphoserine modification. The span at 58-70 shows a compositional bias: gly residues; it reads SGAGGGPASGGGA. A compositionally biased stretch (pro residues) spans 96 to 106; it reads PPGPAPAPAPA. Ser122 is subject to Phosphoserine; by MAPK. Position 172 is a phosphoserine (Ser172). In terms of domain architecture, bHLH spans 187-239; sequence VRRIFTNSRERWRQQNVNGAFAELRKLIPTHPPDKKLSKNEILRLAMKYINFL. The interval 247–329 is disordered; that stretch reads EEEGTQRAKP…LPAADGAGPR (83 aa). The span at 263 to 273 shows a compositional bias: gly residues; it reads GAGGGGAGGGI. The segment covering 317 to 329 has biased composition (low complexity); the sequence is PALLPAADGAGPR.

In terms of assembly, efficient DNA binding requires dimerization with another bHLH protein. Forms heterodimers with TCF3. Binds to the LIM domain containing protein LMO2 and to DRG1. Can assemble in a complex with LDB1 and LMO2. Component of a TAL-1 complex composed at least of CBFA2T3, LDB1, TAL1 and TCF3. Interacts with SBNO2; this interaction inhibits TAL1 occupancy of the DCSTAMP promoter, leading to the activation of the DCSTAMP promoter by the transcription factor MITF. Post-translationally, phosphorylated on serine residues. Phosphorylation of Ser-122 by MAPK is strongly stimulated by hypoxia. Ubiquitinated; subsequent to hypoxia-dependent phosphorylation of Ser-122, ubiquitination targets the protein for rapid degradation via the ubiquitin system. This process may be characteristic for microvascular endothelial cells, since it could not be observed in large vessel endothelial cells. Erythroid and myeloid cells.

Its subcellular location is the nucleus. Implicated in the genesis of hemopoietic malignancies. It may play an important role in hemopoietic differentiation. Serves as a positive regulator of erythroid differentiation. The protein is T-cell acute lymphocytic leukemia protein 1 homolog (Tal1) of Mus musculus (Mouse).